The primary structure comprises 202 residues: Small ribosomal subunit protein uS4c (202 aa).

The S4 RNA-binding domain maps to 90 to 165; it reads MRLDNILFRL…SQKYKIPNHL (76 aa).

This sequence belongs to the universal ribosomal protein uS4 family. Part of the 30S ribosomal subunit. Contacts protein S5. The interaction surface between S4 and S5 is involved in control of translational fidelity.

It localises to the plastid. Its subcellular location is the chloroplast. Functionally, one of the primary rRNA binding proteins, it binds directly to 16S rRNA where it nucleates assembly of the body of the 30S subunit. With S5 and S12 plays an important role in translational accuracy. The polypeptide is Small ribosomal subunit protein uS4c (rps4) (Diphyscium foliosum (Nut-moss)).